A 127-amino-acid chain; its full sequence is Small ribosomal subunit protein uS11 (127 aa).

Belongs to the universal ribosomal protein uS11 family. Part of the 30S ribosomal subunit. Interacts with proteins S7 and S18. Binds to IF-3.

Functionally, located on the platform of the 30S subunit, it bridges several disparate RNA helices of the 16S rRNA. Forms part of the Shine-Dalgarno cleft in the 70S ribosome. The chain is Small ribosomal subunit protein uS11 from Streptococcus gordonii (strain Challis / ATCC 35105 / BCRC 15272 / CH1 / DL1 / V288).